A 477-amino-acid chain; its full sequence is Putative WAS protein family homolog 4 (477 aa).

Residues 1–180 (MSGVMCLKAS…EGLGGLPSNI (180 aa)) form a WHD1 region. Disordered stretches follow at residues 310–420 (QDGV…QGGH) and 434–477 (KGIS…DWES). Residues 315–327 (TPPPPPPPPPPAP) show a composition bias toward pro residues. A VCA region spans residues 362-477 (QGAPREVVDP…QAEDEDDWES (116 aa)). One can recognise a WH2 domain in the interval 374–396 (GWATLLESIRQAGGIGKAKLRSM). Positions 395–411 (SMKERKLEKQQQKEQEQ) are enriched in basic and acidic residues. Over residues 437-449 (SGKGPGAGDGPGG) the composition is skewed to gly residues.

The protein belongs to the WASH1 family. In terms of assembly, interacts (via WHD1 region) with WASHC2C; the interaction is direct.

The protein resides in the early endosome membrane. It localises to the recycling endosome membrane. Functionally, may act as a nucleation-promoting factor at the surface of endosomes, where it recruits and activates the Arp2/3 complex to induce actin polymerization, playing a key role in the fission of tubules that serve as transport intermediates during endosome sorting. The sequence is that of Putative WAS protein family homolog 4 (WASH4P) from Homo sapiens (Human).